The chain runs to 84 residues: Small ribosomal subunit protein bS18 (84 aa).

Belongs to the bacterial ribosomal protein bS18 family. In terms of assembly, part of the 30S ribosomal subunit. Forms a tight heterodimer with protein bS6.

Binds as a heterodimer with protein bS6 to the central domain of the 16S rRNA, where it helps stabilize the platform of the 30S subunit. This Maricaulis maris (strain MCS10) (Caulobacter maris) protein is Small ribosomal subunit protein bS18.